A 103-amino-acid chain; its full sequence is Putative RNA-binding protein RbpB (103 aa).

Positions 2 to 79 (SIYVGNLSYD…RDLKVNKAKP (78 aa)) constitute an RRM domain. A compositionally biased stretch (basic and acidic residues) spans 74-85 (VNKAKPREDRGG). The segment at 74 to 103 (VNKAKPREDRGGSRGSFGGNRSNNNFRNRY) is disordered. The segment covering 92-103 (GNRSNNNFRNRY) has biased composition (low complexity).

The protein is Putative RNA-binding protein RbpB (rbpB) of Nostoc sp. (strain PCC 7120 / SAG 25.82 / UTEX 2576).